The sequence spans 420 residues: 2',3'-cyclic-nucleotide 3'-phosphodiesterase (420 aa).

Serine 9 carries the phosphoserine modification. At tyrosine 110 the chain carries Phosphotyrosine. Phosphoserine is present on residues serine 169, serine 227, and serine 239. The active-site Proton acceptor is the histidine 250. Threonine 252 provides a ligand contact to substrate. Threonine 262 is subject to Phosphothreonine. Histidine 329 (proton donor) is an active-site residue. A substrate-binding site is contributed by threonine 331. Serine 358 is modified (phosphoserine). Cysteine 417 is modified (cysteine methyl ester). The S-farnesyl cysteine moiety is linked to residue cysteine 417. The propeptide at 418 to 420 (TII) is removed in mature form.

It belongs to the 2H phosphoesterase superfamily. CNPase family. In terms of assembly, exists as monomers and homodimers.

It localises to the membrane. The protein resides in the melanosome. The catalysed reaction is a nucleoside 2',3'-cyclic phosphate + H2O = a nucleoside 2'-phosphate + H(+). Its function is as follows. Catalyzes the formation of 2'-nucleotide products from 2',3'-cyclic substrates. May participate in RNA metabolism in the myelinating cell, CNP is the third most abundant protein in central nervous system myelin. In Rattus norvegicus (Rat), this protein is 2',3'-cyclic-nucleotide 3'-phosphodiesterase.